Consider the following 293-residue polypeptide: 4-hydroxy-tetrahydrodipicolinate synthase 1 (293 aa).

Thr-46 provides a ligand contact to pyruvate. Tyr-134 serves as the catalytic Proton donor/acceptor. Lys-162 serves as the catalytic Schiff-base intermediate with substrate. Ile-204 lines the pyruvate pocket.

It belongs to the DapA family. Homotetramer; dimer of dimers.

The protein localises to the cytoplasm. It carries out the reaction L-aspartate 4-semialdehyde + pyruvate = (2S,4S)-4-hydroxy-2,3,4,5-tetrahydrodipicolinate + H2O + H(+). Its pathway is amino-acid biosynthesis; L-lysine biosynthesis via DAP pathway; (S)-tetrahydrodipicolinate from L-aspartate: step 3/4. Catalyzes the condensation of (S)-aspartate-beta-semialdehyde [(S)-ASA] and pyruvate to 4-hydroxy-tetrahydrodipicolinate (HTPA). This is 4-hydroxy-tetrahydrodipicolinate synthase 1 from Clostridium acetobutylicum (strain ATCC 824 / DSM 792 / JCM 1419 / IAM 19013 / LMG 5710 / NBRC 13948 / NRRL B-527 / VKM B-1787 / 2291 / W).